We begin with the raw amino-acid sequence, 369 residues long: Phospho-N-acetylmuramoyl-pentapeptide-transferase (369 aa).

A run of 10 helical transmembrane segments spans residues Ile-2–Phe-22, Gly-54–Leu-74, Gly-80–Leu-100, Phe-113–Val-133, Ala-158–Ile-178, Leu-195–Phe-215, Pro-241–Trp-261, Ile-268–Leu-288, Leu-293–Ile-313, and Phe-347–Leu-367.

Belongs to the glycosyltransferase 4 family. MraY subfamily. The cofactor is Mg(2+).

It localises to the cell membrane. The catalysed reaction is UDP-N-acetyl-alpha-D-muramoyl-L-alanyl-gamma-D-glutamyl-meso-2,6-diaminopimeloyl-D-alanyl-D-alanine + di-trans,octa-cis-undecaprenyl phosphate = di-trans,octa-cis-undecaprenyl diphospho-N-acetyl-alpha-D-muramoyl-L-alanyl-D-glutamyl-meso-2,6-diaminopimeloyl-D-alanyl-D-alanine + UMP. The protein operates within cell wall biogenesis; peptidoglycan biosynthesis. In terms of biological role, catalyzes the initial step of the lipid cycle reactions in the biosynthesis of the cell wall peptidoglycan: transfers peptidoglycan precursor phospho-MurNAc-pentapeptide from UDP-MurNAc-pentapeptide onto the lipid carrier undecaprenyl phosphate, yielding undecaprenyl-pyrophosphoryl-MurNAc-pentapeptide, known as lipid I. This chain is Phospho-N-acetylmuramoyl-pentapeptide-transferase, found in Tropheryma whipplei (strain Twist) (Whipple's bacillus).